The following is a 429-amino-acid chain: Malate dehydrogenase [NADP] 1, chloroplastic (429 aa).

Residues 1-40 (MGLSTAYSPVGSHLAPAPLGHRRSAQLHRPRRALLATVRC) constitute a chloroplast transit peptide. A disulfide bond links C64 and C69. 93 to 99 (GAAGMIS) provides a ligand contact to NADP(+). Substrate contacts are provided by R174 and R180. Residues N187, Q194, and 211–213 (VGN) each bind NADP(+). Substrate-binding residues include N213 and R244. The Proton acceptor role is filled by H269. An intrachain disulfide couples C405 to C417.

Belongs to the LDH/MDH superfamily. MDH type 2 family. As to quaternary structure, homodimer.

Its subcellular location is the plastid. The protein resides in the chloroplast. It carries out the reaction (S)-malate + NADP(+) = oxaloacetate + NADPH + H(+). Its activity is regulated as follows. Chloroplast NADP-MDH is activated upon illumination. In order to be enzymatically active, disulfide bridges on the protein must be reduced by thioredoxin which receives electrons from ferredoxin and the electron transport system of photosynthesis. Its function is as follows. The chloroplastic, NADP-dependent form is essential for the photosynthesis C4 cycle, which allows plants to circumvent the problem of photorespiration. In C4 plants, NADP-MDH activity acts to convert oxaloacetate to malate in chloroplasts of mesophyll cells for transport to the bundle sheath cells. The sequence is that of Malate dehydrogenase [NADP] 1, chloroplastic from Sorghum bicolor (Sorghum).